The sequence spans 80 residues: UPF0180 protein BPUM_1317 (80 aa).

It belongs to the UPF0180 family.

The chain is UPF0180 protein BPUM_1317 from Bacillus pumilus (strain SAFR-032).